Consider the following 293-residue polypeptide: 33 kDa chaperonin (293 aa).

Disulfide bonds link Cys-238–Cys-240 and Cys-271–Cys-274.

This sequence belongs to the HSP33 family. Under oxidizing conditions two disulfide bonds are formed involving the reactive cysteines. Under reducing conditions zinc is bound to the reactive cysteines and the protein is inactive.

The protein localises to the cytoplasm. Redox regulated molecular chaperone. Protects both thermally unfolding and oxidatively damaged proteins from irreversible aggregation. Plays an important role in the bacterial defense system toward oxidative stress. The protein is 33 kDa chaperonin of Staphylococcus aureus (strain USA300).